Consider the following 367-residue polypeptide: Germination protease (367 aa).

A propeptide spanning residues 1–15 (MKEPLDLSKYSVRTD) is cleaved from the precursor.

The protein belongs to the peptidase A25 family. Homotetramer. Post-translationally, autoproteolytically processed. The inactive tetrameric zymogen termed p46 autoprocesses to a smaller form termed p41, which is active only during spore germination.

The enzyme catalyses Endopeptidase action with P4 Glu or Asp, P1 preferably Glu &gt; Asp, P1' hydrophobic and P2' Ala.. In terms of biological role, initiates the rapid degradation of small, acid-soluble proteins during spore germination. This Bacillus mycoides (strain KBAB4) (Bacillus weihenstephanensis) protein is Germination protease.